The primary structure comprises 275 residues: T-cell ecto-ADP-ribosyltransferase 1 (275 aa).

A signal peptide spans 1–20 (MPSNICKFFLTWWLIQQVTG). Disulfide bonds link Cys-41–Cys-243 and Cys-141–Cys-193. N-linked (GlcNAc...) asparagine glycosylation is present at Asn-58. In terms of domain architecture, TR mART core spans 61–238 (EKLKVAWEEA…IFLDSPKRKK (178 aa)). The NAD(+) site is built by Tyr-98, Arg-146, and Gln-164. Arg-146 is a catalytic residue. Ser-167 is an active-site residue. Residue Ser-202 coordinates NAD(+). Glu-209 is an active-site residue. Residue Ser-246 is the site of GPI-anchor amidated serine attachment. Residues 247-275 (SAGTRESCVSLFLVVLTSLLVQLLCLAEP) constitute a propeptide, removed in mature form.

It belongs to the Arg-specific ADP-ribosyltransferase family. In terms of tissue distribution, postthymic T-cells.

The protein resides in the cell membrane. The enzyme catalyses L-arginyl-[protein] + NAD(+) = N(omega)-(ADP-D-ribosyl)-L-arginyl-[protein] + nicotinamide + H(+). It catalyses the reaction NAD(+) + H2O = ADP-D-ribose + nicotinamide + H(+). In terms of biological role, has NAD(+) glycohydrolase activity and extremely low ADP-ribosyltransferase activity. The sequence is that of T-cell ecto-ADP-ribosyltransferase 1 (Art2a) from Rattus norvegicus (Rat).